The chain runs to 159 residues: Nucleoside diphosphate kinase (159 aa).

ATP contacts are provided by Lys14, Phe62, Arg90, Thr96, and Arg107. The Pros-phosphohistidine intermediate role is filled by His123.

Belongs to the NDK family. The cofactor is Mg(2+).

It localises to the cytoplasm. It carries out the reaction a 2'-deoxyribonucleoside 5'-diphosphate + ATP = a 2'-deoxyribonucleoside 5'-triphosphate + ADP. The catalysed reaction is a ribonucleoside 5'-diphosphate + ATP = a ribonucleoside 5'-triphosphate + ADP. In terms of biological role, major role in the synthesis of nucleoside triphosphates other than ATP. The ATP gamma phosphate is transferred to the NDP beta phosphate via a ping-pong mechanism, using a phosphorylated active-site intermediate. The polypeptide is Nucleoside diphosphate kinase (Pyrococcus abyssi (strain GE5 / Orsay)).